Reading from the N-terminus, the 72-residue chain is Aurein-2.5 (72 aa).

The N-terminal stretch at 1-22 is a signal peptide; sequence MAFLKKSLFLVLFLGLVSLSIC. Positions 23 to 49 are excised as a propeptide; that stretch reads EKEKRQNEEDEDENEAANHEEGSEEKR. The segment at 27–47 is disordered; the sequence is RQNEEDEDENEAANHEEGSEE. A compositionally biased stretch (basic and acidic residues) spans 38–47; that stretch reads AANHEEGSEE. Leu-65 is subject to Leucine amide. A propeptide spanning residues 69 to 72 is cleaved from the precursor; that stretch reads NDLE.

The protein belongs to the frog skin active peptide (FSAP) family. Aurein subfamily. In terms of assembly, may be monomeric or may oligomerize as homodimers or homotrimers in Gram-positive and Gram-negative bacteria mimetic membranes. Post-translationally, C-terminal amidation enhances antibacterial activity. This increase may be due to stabilization of the alpha-helical structure at the membrane interface. In terms of tissue distribution, expressed by the skin dorsal glands.

Its subcellular location is the secreted. It localises to the target cell membrane. In terms of biological role, amphipathic alpha-helical antimicrobial peptide with moderate to potent activity against Gram-positive bacteria, Gram-negative bacteria and fungi. Also shows a weak activity against biofilm of both Gram-positive and Gram-negative bacteria. Probably acts by disturbing membrane functions with its amphipathic structure. Kills fungi via membranolytic action. Enhanced sterol levels in lipid composition membranes reduce interaction of this peptide with membranes, having a protective effect against the lytic ability of the peptide. Shows anticancer activity. The sequence is that of Aurein-2.5 from Ranoidea aurea (Green and golden bell frog).